We begin with the raw amino-acid sequence, 663 residues long: Forkhead protein sep1 (663 aa).

Residues 128–222 constitute a DNA-binding region (fork-head); the sequence is KPPYSYAMLI…LKLKLRKPGV (95 aa). Disordered regions lie at residues 220-241 and 325-387; these read PGVNSRPAPPVQDVTSSTKYGS and SPLQ…DVET. The span at 340-355 shows a compositional bias: low complexity; it reads SPASSASPSESLRNES. Position 446 is a phosphoserine (serine 446).

The protein localises to the nucleus. Functionally, required for promoter sequence element PCB-driven, M-phase-specific transcription. Acts as a transcriptional activator with a role in the regulation of mitosis. Regulates septation and the periodic transcription of cdc15. The polypeptide is Forkhead protein sep1 (sep1) (Schizosaccharomyces pombe (strain 972 / ATCC 24843) (Fission yeast)).